We begin with the raw amino-acid sequence, 1085 residues long: MALYSCCWILLAFSTWCTSAYGPDQRAQKKGDIILGGLFPIHFGVAVKDQDLKSRPESVECIRYNFRGFRWLQAMIFAIEEINSSPALLPNMTLGYRIFDTCNTVSKALEATLSFVAQNKIDSLNLDEFCNCSEHIPSTIAVVGATGSGISTAVANLLGLFYIPQVSYASSSRLLSNKNQFKSFLRTIPNDEHQATAMADIIEYFRWNWVGTIAADDDYGRPGIEKFREEAEERDICIDFSELISQYSDEEKIQQVVEVIQNSTAKVIVVFSSGPDLEPLIKEIVRRNITGRIWLASEAWASSSLIAMPEYFHVVGGTIGFGLKAGQIPGFREFLQKVHPRKSVHNGFAKEFWEETFNCHLQEGAKGPLPVDTFLRGHEEGGARLSNSPTAFRPLCTGEENISSVETPYMDYTHLRISYNVYLAVYSIAHALQDIYTCIPGRGLFTNGSCADIKKVEAWQVLKHLRHLNFTSNMGEQVTFDECGDLAGNYSIINWHLSPEDGSIVFKEVGYYNVYAKKGERLFINDEKILWSGFSREVPFSNCSRDCLAGTRKGIIEGEPTCCFECVECPDGEYSDETDASACDKCPDDFWSNENHTSCIAKEIEFLSWTEPFGIALTLFAVLGIFLTAFVLGVFIKFRNTPIVKATNRELSYLLLFSLLCCFSSSLFFIGEPQDWTCRLRQPAFGISFVLCISCILVKTNRVLLVFEAKIPTSFHRKWWGLNLQFLLVFLCTFMQIVICAIWLNTAPPSSYRNHELEDEIIFITCHEGSLMALGFLIGYTCLLAAICFFFAFKSRKLPENFNEAKFITFSMLIFFIVWISFIPAYASTYGKFVSAVEVIAILAASFGLLACIFFNKVYIILFKPSRNTIEEVRCSTAAHAFKVAARATLRRSNVSRQRSSSLGGSTGSTPSSSISSKSNSEDPFPQQQPKRQKQPQPLALSPHNAQQPQPRPPSTPQPQPQSQQPPRCKQKVIFGSGTVTFSLSFDEPQKTAVAHRNSTHQTSLEAQKNNDALTKHQALLPLQCGETDSELTSQETGLQGPVGEDHQLEMEDPEEMSPALVVSNSRSFVISGGGSTVTENMLRS.

A signal peptide spans 1 to 19 (MALYSCCWILLAFSTWCTS). The Extracellular segment spans residues 20 to 611 (AYGPDQRAQK…KEIEFLSWTE (592 aa)). A ligand-binding 1 (LB1) region spans residues 23–189 (PDQRAQKKGD…QFKSFLRTIP (167 aa)). Residues Cys61 and Cys102 are joined by a disulfide bond. 67 to 71 (RGFRW) is a phosphate binding site. Residues Ile82, Ser85, Leu88, and Leu89 each contribute to the Ca(2+) site. Residue Asn91 is glycosylated (N-linked (GlcNAc...) asparagine). Ca(2+) is bound at residue Thr101. Asn131 carries an N-linked (GlcNAc...) asparagine glycan. Thr146 is a binding site for Ca(2+). Ser148, Ala169, and Ser171 together coordinate L-tryptophan. Residues Ser171, Pro189, Asp191, Glu232, and Asp235 each contribute to the Ca(2+) site. The tract at residues 190 to 325 (NDEHQATAMA…GGTIGFGLKA (136 aa)) is ligand-binding 2 (LB2). 7 disulfides stabilise this stretch: Cys237-Cys562, Cys359-Cys396, Cys438-Cys450, Cys543-Cys563, Cys547-Cys566, Cys569-Cys583, and Cys586-Cys599. Asp239 and Ser241 together coordinate spermine. Residues Asn262 and Asn288 are each glycosylated (N-linked (GlcNAc...) asparagine). Ca(2+) is bound at residue Glu298. Residue Glu298 coordinates L-tryptophan. Residue Asn401 is glycosylated (N-linked (GlcNAc...) asparagine). Phosphate is bound at residue 416 to 418 (RIS). Asn447, Asn469, and Asn489 each carry an N-linked (GlcNAc...) asparagine glycan. Tyr490 contacts Ca(2+). Asn542 carries an N-linked (GlcNAc...) asparagine glycan. The interval 543–613 (CSRDCLAGTR…IEFLSWTEPF (71 aa)) is cysteine-rich (CR). Residue Gly558 participates in Ca(2+) binding. Asn595 carries an N-linked (GlcNAc...) asparagine glycan. Residues 612–637 (PFGIALTLFAVLGIFLTAFVLGVFIK) traverse the membrane as a helical segment. At 638–649 (FRNTPIVKATNR) the chain is on the cytoplasmic side. Residues 638–649 (FRNTPIVKATNR) are intracellular loop 1 (ICL1). The chain crosses the membrane as a helical span at residues 650 to 669 (ELSYLLLFSLLCCFSSSLFF). Over 670–675 (IGEPQD) the chain is Extracellular. Residues 676 to 699 (WTCRLRQPAFGISFVLCISCILVK) traverse the membrane as a helical segment. The Cytoplasmic segment spans residues 700 to 723 (TNRVLLVFEAKIPTSFHRKWWGLN). Positions 700 to 723 (TNRVLLVFEAKIPTSFHRKWWGLN) are intracellular loop 2 (ICL2). A helical transmembrane segment spans residues 724–746 (LQFLLVFLCTFMQIVICAIWLNT). The Extracellular portion of the chain corresponds to 747-770 (APPSSYRNHELEDEIIFITCHEGS). Residues 771–790 (LMALGFLIGYTCLLAAICFF) traverse the membrane as a helical segment. The Cytoplasmic segment spans residues 791 to 806 (FAFKSRKLPENFNEAK). Residues 791 to 806 (FAFKSRKLPENFNEAK) form an intracellular loop 3 (ICL3) region. Residues 807-829 (FITFSMLIFFIVWISFIPAYAST) traverse the membrane as a helical segment. Topologically, residues 830–833 (YGKF) are extracellular. Residues 834 to 855 (VSAVEVIAILAASFGLLACIFF) form a helical membrane-spanning segment. The Cytoplasmic portion of the chain corresponds to 856-1085 (NKVYIILFKP…STVTENMLRS (230 aa)). The segment at 856–1085 (NKVYIILFKP…STVTENMLRS (230 aa)) is C-terminus. Positions 881-901 (AFKVAARATLRRSNVSRQRSS) are interaction with RNF19A. Residue Thr889 is modified to Phosphothreonine. The arginine-rich retention motif stretch occupies residues 891-899 (RRSNVSRQR). 3 positions are modified to phosphoserine: Ser893, Ser900, and Ser921. The segment covering 893-938 (SNVSRQRSSSLGGSTGSTPSSSISSKSNSEDPFPQQQPKRQKQPQP) has biased composition (low complexity). Disordered regions lie at residues 893-969 (SNVS…PPRC) and 1034-1058 (SQETGLQGPVGEDHQLEMEDPEEMS). Positions 950–960 (QPRPPSTPQPQ) are enriched in pro residues. Ser1068 bears the Phosphoserine mark.

It belongs to the G-protein coupled receptor 3 family. As to quaternary structure, homodimer; disulfide-linked. Interacts with VCP. Interacts with ARRB1. Phosphorylation at Thr-889 by PKC impairs coupling with G(q)/G(11) G-proteins, while it does not affect G(i)/G(o)-coupling. Phosphorylation at Ser-893 by PKC and Ser-900 by PKA promote plasma membrane localization. Post-translationally, ubiquitinated by RNF19A; which induces proteasomal degradation.

The protein localises to the cell membrane. With respect to regulation, in resting state, adopts an open conformation, anion-binding promoting the inactive configuration. Upon aromatic amino acid-binding, the groove in the extracellular venus flytrap module is closed, thereby inducing the formation of a novel homodimer interface between subunits. Calcium ions stabilize the active state by enhancing homodimer interactions between membrane-proximal domains to fully activate the receptor. Upon activation, the homodimer adopts an asymmetric configuration of the 7-transmembrane region that primes one protomer for G-protein coupling. G-protein binding expands the transmembrane dimer interface; the restriction imposed by the receptor dimer, in combination with intracellular loop 2 (ICL2), enables G-protein activation by facilitating conformational transition of G-protein alpha. Coupling to different classes of G-proteins results in distinct CASR-G-protein interfaces. Functionally, G-protein-coupled receptor that senses changes in the extracellular concentration of calcium ions and plays a key role in maintaining calcium homeostasis. Senses fluctuations in the circulating calcium concentration: activated by elevated circulating calcium, leading to decreased parathyroid hormone (PTH) secretion in parathyroid glands. In kidneys, acts as a key regulator of renal tubular calcium resorption. Ligand binding causes a conformation change that triggers signaling via guanine nucleotide-binding proteins (G-proteins) and modulates the activity of downstream effectors. CASR is coupled with different G(q)/G(11), G(i)/G(o)- or G(s)-classes of G-proteins depending on the context. In the parathyroid and kidney, CASR signals through G(q)/G(11) and G(i)/G(o) G-proteins: G(q)/G(11) coupling activates phospholipase C-beta, releasing diacylglycerol (DAG) and inositol 1,4,5-trisphosphate (IP3) second messengers, while G(i)/G(o) coupling mediates inhibition of adenylate cyclase activity. The G-protein-coupled receptor activity is activated by a co-agonist mechanism: aromatic amino acids, such as Trp or Phe, act concertedly with divalent cations, such as calcium or magnesium, to achieve full receptor activation. Acts as an activator of the NLRP3 inflammasome via G(i)/G(o)-mediated signaling: down-regulation of cyclic AMP (cAMP) relieving NLRP3 inhibition by cAMP. Acts as a regulator of proton-sensing receptor GPR68 in a seesaw manner: CASR-mediated signaling inhibits GPR68 signaling in response to extracellular calcium, while GPR68 inhibits CASR in presence of extracellular protons. This Bos taurus (Bovine) protein is Extracellular calcium-sensing receptor (CASR).